Reading from the N-terminus, the 387-residue chain is 3-ketoacyl-CoA thiolase (387 aa).

The active-site Acyl-thioester intermediate is the Cys-91. Active-site proton acceptor residues include His-343 and Cys-373.

Belongs to the thiolase-like superfamily. Thiolase family. Heterotetramer of two alpha chains (FadB) and two beta chains (FadA).

Its subcellular location is the cytoplasm. The enzyme catalyses an acyl-CoA + acetyl-CoA = a 3-oxoacyl-CoA + CoA. The protein operates within lipid metabolism; fatty acid beta-oxidation. In terms of biological role, catalyzes the final step of fatty acid oxidation in which acetyl-CoA is released and the CoA ester of a fatty acid two carbons shorter is formed. This Klebsiella pneumoniae subsp. pneumoniae (strain ATCC 700721 / MGH 78578) protein is 3-ketoacyl-CoA thiolase.